The sequence spans 264 residues: MNYVKKALYDEMLSFYHTTLGMEHEDRLRLRGQIGHLVRVARKEIPDTLETKAKIHLLLQLFYGEWGFHCDPESYFLSSNLYLNDVLETRRGMPVSLGAILLYIADKLNLPLYPVNFPTQLVIRAEVEGEVAFINPWDGQYISQALLHKWYEGAMGFGMTLTPTELAIANVGDLLGRFRQLAKNALIREEKNDEAFCYIARLIHYNPEDPYEIRDRGLVLAQMGCYHVATEDFQYFIDQCPQDPTALLLKNQLEELKQDTYPIH.

Belongs to the UPF0162 family.

The sequence is that of UPF0162 protein PM0557 from Pasteurella multocida (strain Pm70).